The primary structure comprises 470 residues: Meiosis-specific with OB domain-containing protein (470 aa).

A DNA-binding region (OB) is located at residues 167–272 (IINVLAAVRS…EANILLNFIR (106 aa)).

Belongs to the MEIOB family. As to quaternary structure, component of a multiprotein complex with RPA2 and SPATA22. Interacts with SPATA22. Interacts with the complex BRME1:HSF2BP:BRCA2.

The protein localises to the cytoplasm. The protein resides in the nucleus. It localises to the chromosome. Functionally, single-stranded DNA-binding protein required for homologous recombination in meiosis I. Required for double strand breaks (DSBs) repair and crossover formation and promotion of faithful and complete synapsis. Not required for the initial loading of recombinases but required to maintain a proper number of RAD51 and DMC1 foci after the zygotene stage. May act by ensuring the stabilization of recombinases, which is required for successful homology search and meiotic recombination. Displays Single-stranded DNA 3'-5' exonuclease activity in vitro. This chain is Meiosis-specific with OB domain-containing protein, found in Rattus norvegicus (Rat).